Here is a 94-residue protein sequence, read N- to C-terminus: Protein canopy homolog 1 (94 aa).

Belongs to the canopy family.

The polypeptide is Protein canopy homolog 1 (Cnpy1) (Mus musculus (Mouse)).